Reading from the N-terminus, the 846-residue chain is MAPLAVDPAALDSAGGAVVAAGAGLGAVISSLTAALAGCAGMAGDDPAGAVFGRSYDGSAAALVQAMSVARNGLCNLGDGVRMSAHNYSLAEAMSDVAGRAAPLPAPPPSGCVGVGAPPSAVGGGGGAPKGWGWVAPYIGMIWPNGDSTKLRAAAVAWRSAGTQFALTEIQSTAGPMGVIRAQQLPEAGLIESAFADAYASTTAVVGQCHQLAAQLDAYAARIDAVHAAVLDLLARICDPLTGIKEVWEFLTDQDEDEIQRIAHDIAVVVDQFSGEVDALAAEITAVVSHAEAVITAMADHAGKQWDRFLHSNPVGVVIDGTGQQLKGFGEEAFGMAKDSWDLGPLRASIDPFGWYRSWEEMLTGMAPLAGLGGENAPGVVESWKQFGKSLIHWDEWTTNPNEALGKTVFDAATLALPGGPLSKLGSKGRDILAGVRGLKERLEPTTPHLEPPATPPRPGPQPPRIEPPESGHPAPAPAAKPAPVPANGPLPHSPTESKPPPVDRPAEPVAPSSASAGQPRVSAATTPGTHVPHGLPQPGEHVPAQAPPATTLLGGPPVESAPATAHQPQWATTPAAPAAAPHSTPGGVHSTESGPHGRSLSAHGSEPTHDGASHGSGHGSGSEPPGLHAPHREQQLAMHSNEPAGEGWHRLSDEAVDPQYGEPLSRHWDFTDNPADRSRINPVVAQLMEDPNAPFGRDPQGQPYTQERYQERFNSVGPWGQQYSNFPPNNGAVPGTRIAYTNLEKFLSDYGPQLDRIGGDQGKYLAIMEHGRPASWEQRALHVTSLRDPYHAYTIDWLPEGWFIEVSEVAPGCGQPGGSIQVRIFDHQNEMRKVEELIRRGVLRQ.

The tract at residues M1–L443 is NTD. The tract at residues R442–A630 is disordered. 2 stretches are compositionally biased toward pro residues: residues L450–I466 and A475–D504. Low complexity-rich tracts occupy residues E508 to A517 and A562 to P586. The segment at R651–Q846 is TNT. A TNT domain is found at Y751–Q846. R757 is an active-site residue. An NAD(+)-binding site is contributed by R780. Q822 is an active-site residue.

As to quaternary structure, interacts with the immunity factor for TNT (IFT) homolog. The C-terminal domain (TNT) is probably cleaved.

The protein resides in the cell outer membrane. The protein localises to the secreted. It is found in the cell surface. It catalyses the reaction NAD(+) + H2O = ADP-D-ribose + nicotinamide + H(+). With respect to regulation, glycohydrolase activity is completely inhibited by interaction with the immunity factor for TNT (IFT) homolog. This inhibition protects M.bovis from self-poisoning. Functionally, the N-terminal domain (NTD) forms an outer membrane channel and is used for uptake of nutrients across the outer membrane. Also confers susceptibility to structurally different antibiotics and antituberculosis drugs, and to toxic immune factors such as nitric oxide (NO). The C-terminal domain (TNT) is dispensable for normal growth in macrophages. In Mycobacterium bovis (strain BCG / Pasteur 1173P2), this protein is Outer membrane channel protein CpnT.